Here is a 166-residue protein sequence, read N- to C-terminus: Probable tyrosine-protein phosphatase DG1060 (166 aa).

Residues 9–162 form the Tyrosine-protein phosphatase domain; the sequence is NFGMVADDLY…LVTYNNAPQW (154 aa). The active-site Phosphocysteine intermediate is the C101.

The protein belongs to the protein-tyrosine phosphatase family.

The protein resides in the cytoplasm. The enzyme catalyses O-phospho-L-tyrosyl-[protein] + H2O = L-tyrosyl-[protein] + phosphate. The protein is Probable tyrosine-protein phosphatase DG1060 (DG1060) of Dictyostelium discoideum (Social amoeba).